A 137-amino-acid polypeptide reads, in one-letter code: Bet1-like protein At4g14600 (137 aa).

Residues 1–113 (MASNPHRSGA…MSIIRSGNNH (113 aa)) lie on the Cytoplasmic side of the membrane. Residues 43–105 (DPMHSDLDDE…KNNIRKLNMS (63 aa)) form the t-SNARE coiled-coil homology domain. A helical; Anchor for type IV membrane protein transmembrane segment spans residues 114–134 (IMHVVLFALLVFFVLYIWSKM). The Vesicular portion of the chain corresponds to 135–137 (FKR).

It belongs to the BET1 family.

The protein resides in the golgi apparatus membrane. Its subcellular location is the endoplasmic reticulum membrane. Required for vesicular transport from the ER to the Golgi complex. Functions as a SNARE associated with ER-derived vesicles. The chain is Bet1-like protein At4g14600 from Arabidopsis thaliana (Mouse-ear cress).